Consider the following 682-residue polypeptide: E3 ubiquitin-protein ligase RNF103 (682 aa).

The next 4 helical transmembrane spans lie at 6–26, 326–346, 366–386, and 411–431; these read FFLL…EAIV, LFVL…FITQ, LLII…LDSF, and MFYS…GLLI. Positions 525-542 are enriched in acidic residues; the sequence is EEMSESSQDTENDSDSDN. Residues 525–549 form a disordered region; the sequence is EEMSESSQDTENDSDSDNTDTFSSS. Residues 618-660 form an RING-type zinc finger; sequence CVVCLENFENGCLLMGLPCGHVFHQNCIVMWLAGGRHCCPVCR.

As to quaternary structure, interacts with DERL1 and VCP. Expressed in different tissues including hippocampus, cerebral cortex, heart, kidney, spleen and lung. Expression is increased in hippocampus and frontal cortex after chronic treatment with antidepressants.

It is found in the endoplasmic reticulum membrane. It carries out the reaction S-ubiquitinyl-[E2 ubiquitin-conjugating enzyme]-L-cysteine + [acceptor protein]-L-lysine = [E2 ubiquitin-conjugating enzyme]-L-cysteine + N(6)-ubiquitinyl-[acceptor protein]-L-lysine.. It functions in the pathway protein modification; protein ubiquitination. Acts as an E2-dependent E3 ubiquitin-protein ligase, probably involved in the ER-associated protein degradation pathway. In Rattus norvegicus (Rat), this protein is E3 ubiquitin-protein ligase RNF103 (Rnf103).